The following is a 307-amino-acid chain: Protein PROCA1 (307 aa).

2 disordered regions span residues asparagine 134–aspartate 155 and arginine 183–serine 307. A compositionally biased stretch (basic residues) spans leucine 200–proline 214. A compositionally biased stretch (polar residues) spans lysine 216–valine 228. Serine 220 is subject to Phosphoserine. Residues proline 235–glutamate 248 show a composition bias toward low complexity. Phosphoserine is present on residues serine 250, serine 259, serine 260, serine 298, and serine 307. Basic and acidic residues predominate over residues serine 250–serine 260.

It belongs to the PROCA1 family.

This Mus musculus (Mouse) protein is Protein PROCA1 (Proca1).